A 473-amino-acid chain; its full sequence is 3-isopropylmalate dehydratase large subunit (473 aa).

Residues Cys351, Cys414, and Cys417 each coordinate [4Fe-4S] cluster.

The protein belongs to the aconitase/IPM isomerase family. LeuC type 1 subfamily. In terms of assembly, heterodimer of LeuC and LeuD. It depends on [4Fe-4S] cluster as a cofactor.

The enzyme catalyses (2R,3S)-3-isopropylmalate = (2S)-2-isopropylmalate. Its pathway is amino-acid biosynthesis; L-leucine biosynthesis; L-leucine from 3-methyl-2-oxobutanoate: step 2/4. Functionally, catalyzes the isomerization between 2-isopropylmalate and 3-isopropylmalate, via the formation of 2-isopropylmaleate. The chain is 3-isopropylmalate dehydratase large subunit from Polaromonas sp. (strain JS666 / ATCC BAA-500).